Reading from the N-terminus, the 489-residue chain is Hydantoin permease (489 aa).

12 consecutive transmembrane segments (helical) span residues 30–50 (FSLA…IAAG), 58–78 (VWQV…LLFF), 104–124 (LIPI…QTWL), 144–164 (LWIV…ITFI), 167–187 (MNVF…YLML), 207–227 (MPFS…VVSI), 258–278 (LGMV…MVLV), 299–321 (AILF…NLLS), 339–359 (GVIV…AGVL), 362–382 (FLNL…SDYF), 405–424 (RGVN…VSFL), and 428–445 (LMFV…IPAM). Na(+) is bound by residues Ala-38 and Ile-41. Gln-121 is a binding site for substrate. Gly-219 lines the substrate pocket. The Na(+) site is built by Ala-309, Ser-312, and Thr-313. Asn-318 contributes to the substrate binding site. Residues 468-489 (PIGPVAPADESATANTKEQNQR) form a disordered region. Polar residues predominate over residues 479-489 (ATANTKEQNQR).

The protein belongs to the purine-cytosine permease (2.A.39) family.

It localises to the membrane. Its activity is regulated as follows. Inhibited by dinitrophenol, 5-(2-naphthylmethyl)-D-hydantoin (D-NMH), 5-(2-naphthylmethyl)-L-hydantoin (L-NMH), 5-bromovinylhydantoin (BVH) and 5-indolylmethyl-L-hydantoin (L-IMH). The affinity of benzyl-hydantoin is increased over 10-fold in the presence of 15 mM of sodium. Nucleobase-proton symporter that mediates the sodium-dependent binding and uptake of 5-aryl-substituted hydantoin compounds. 5-indolyl methyl hydantoin and 5-benzyl hydantoin are the preferred substrates, with selectivity for a hydrophobic substituent in position 5 of hydantoin and for the L isomer over the D isomer. The protein is Hydantoin permease of Microbacterium maritypicum (Microbacterium liquefaciens).